A 262-amino-acid polypeptide reads, in one-letter code: Phosphate import ATP-binding protein PstB 2 (262 aa).

The 240-residue stretch at 18–257 folds into the ABC transporter domain; that stretch reads FVVRNLDLFY…PSDRRTEDYI (240 aa). 50–57 lines the ATP pocket; the sequence is GPSGCGKS.

The protein belongs to the ABC transporter superfamily. Phosphate importer (TC 3.A.1.7) family. The complex is composed of two ATP-binding proteins (PstB), two transmembrane proteins (PstC and PstA) and a solute-binding protein (PstS).

The protein localises to the cell membrane. The catalysed reaction is phosphate(out) + ATP + H2O = ADP + 2 phosphate(in) + H(+). Functionally, part of the ABC transporter complex PstSACB involved in phosphate import. Responsible for energy coupling to the transport system. The polypeptide is Phosphate import ATP-binding protein PstB 2 (Symbiobacterium thermophilum (strain DSM 24528 / JCM 14929 / IAM 14863 / T)).